A 123-amino-acid polypeptide reads, in one-letter code: Holo-[acyl-carrier-protein] synthase (123 aa).

Asp8 and Glu56 together coordinate Mg(2+).

The protein belongs to the P-Pant transferase superfamily. AcpS family. The cofactor is Mg(2+).

The protein resides in the cytoplasm. It catalyses the reaction apo-[ACP] + CoA = holo-[ACP] + adenosine 3',5'-bisphosphate + H(+). In terms of biological role, transfers the 4'-phosphopantetheine moiety from coenzyme A to a Ser of acyl-carrier-protein. This chain is Holo-[acyl-carrier-protein] synthase, found in Clostridium botulinum (strain Alaska E43 / Type E3).